Consider the following 195-residue polypeptide: Probable septum site-determining protein MinC (195 aa).

The protein belongs to the MinC family. Interacts with MinD and FtsZ.

In terms of biological role, cell division inhibitor that blocks the formation of polar Z ring septums. Rapidly oscillates between the poles of the cell to destabilize FtsZ filaments that have formed before they mature into polar Z rings. Prevents FtsZ polymerization. The chain is Probable septum site-determining protein MinC from Helicobacter pylori (strain P12).